The following is a 307-amino-acid chain: UDP-3-O-acyl-N-acetylglucosamine deacetylase (307 aa).

The Zn(2+) site is built by H80, H239, and D243. The Proton donor role is filled by H266.

This sequence belongs to the LpxC family. It depends on Zn(2+) as a cofactor.

It carries out the reaction a UDP-3-O-[(3R)-3-hydroxyacyl]-N-acetyl-alpha-D-glucosamine + H2O = a UDP-3-O-[(3R)-3-hydroxyacyl]-alpha-D-glucosamine + acetate. It participates in glycolipid biosynthesis; lipid IV(A) biosynthesis; lipid IV(A) from (3R)-3-hydroxytetradecanoyl-[acyl-carrier-protein] and UDP-N-acetyl-alpha-D-glucosamine: step 2/6. Catalyzes the hydrolysis of UDP-3-O-myristoyl-N-acetylglucosamine to form UDP-3-O-myristoylglucosamine and acetate, the committed step in lipid A biosynthesis. The polypeptide is UDP-3-O-acyl-N-acetylglucosamine deacetylase (Neisseria meningitidis serogroup A / serotype 4A (strain DSM 15465 / Z2491)).